Reading from the N-terminus, the 438-residue chain is DEAD-box ATP-dependent RNA helicase CshB (438 aa).

Positions 4-32 match the Q motif motif; the sequence is TKFELYELKPFIIDAVHRLGFYEPTDIQK. Positions 35-208 constitute a Helicase ATP-binding domain; that stretch reads IPAVLKKESV…KKYMENPKYA (174 aa). 48-55 is an ATP binding site; the sequence is SQTGTGKT. The DEAD box motif lies at 156-159; that stretch reads DEAD. In terms of domain architecture, Helicase C-terminal spans 235–385; it reads LLFDIMSHLN…EWKKGDDRQR (151 aa). The interval 380 to 438 is disordered; the sequence is GDDRQRRKKRKKTPNEADEIAHRLVKKPKKVKPGYKKKMSYEMEKIKKKQRRNQSKKRK. Residues 392-401 are compositionally biased toward basic and acidic residues; it reads TPNEADEIAH. 2 stretches are compositionally biased toward basic residues: residues 402–417 and 425–438; these read RLVK…YKKK and IKKK…KKRK.

The protein belongs to the DEAD box helicase family. Interacts with CspB when cells are transcriptionally active. May interact with RNA helicases CshA and DbpA (DeaD), may be a component of a possible RNA degradosome complex composed of rny, rnja, rnjb, pnp, pfkA and eno (although rnjA and rnjB's presence is unclear). Specifically interacts with pnp and rny.

The protein localises to the cytoplasm. It localises to the nucleoid. The catalysed reaction is ATP + H2O = ADP + phosphate + H(+). In terms of biological role, DEAD-box RNA helicase that plays a role in 70S ribosome assembly. May work in conjunction with the cold shock proteins to ensure proper initiation of transcription at low and optimal temperatures. The protein is DEAD-box ATP-dependent RNA helicase CshB of Bacillus subtilis (strain 168).